Here is a 361-residue protein sequence, read N- to C-terminus: POU domain, class 3, transcription factor 4 (361 aa).

2 disordered regions span residues 99 to 131 (PHVAHHSPHTNHPNAWGASPAPNSSITSSGQPL) and 144 to 192 (MLEH…PTSD). Residues 119–131 (APNSSITSSGQPL) are compositionally biased toward polar residues. Basic and acidic residues predominate over residues 165-183 (VLREPPDHGELGSHHCQDH). The POU-specific domain maps to 186-260 (EETPTSDELE…LLNKWLEEAD (75 aa)). At S265 the chain carries Phosphoserine. A DNA-binding region (homeobox) is located at residues 278 to 337 (KRKKRTSIEVSVKGVLETHFLKCPKPAAQEISSLADSLQLEKEVVRVWFCNRRQKEKRMT). The disordered stretch occupies residues 334 to 361 (KRMTPPGDQQPHEVYSHTVKTDASCHDL). Residues 343–361 (QPHEVYSHTVKTDASCHDL) are compositionally biased toward basic and acidic residues.

This sequence belongs to the POU transcription factor family. Class-3 subfamily. In terms of assembly, interacts with HNRNPU. Brain specific.

The protein localises to the nucleus. In terms of biological role, probable transcription factor which exert its primary action widely during early neural development and in a very limited set of neurons in the mature brain. In Mus musculus (Mouse), this protein is POU domain, class 3, transcription factor 4 (Pou3f4).